The following is a 130-amino-acid chain: Glycoprotein hormone beta-5 (130 aa).

The first 24 residues, 1–24, serve as a signal peptide directing secretion; sequence MKLVYLVLGAVALLLLGGPDSVLS. Intrachain disulfides connect Cys-36/Cys-84, Cys-50/Cys-99, Cys-60/Cys-115, Cys-64/Cys-117, and Cys-120/Cys-127. N-linked (GlcNAc...) asparagine glycosylation is present at Asn-87.

The protein belongs to the glycoprotein hormones subunit beta family. As to quaternary structure, heterodimer with GPHA2; this heterodimer interacts with thyroid-stimulating hormone receptor (TSHR), and hence stimulates cAMP production. N-glycosylated. Expressed in the anterior lobe of pituitary.

It is found in the secreted. Functions as a heterodimeric glycoprotein hormone with GPHA2 able to bind and activate the thyroid-stimulating hormone receptor (TSHR), leading to increased cAMP production. Plays a central role in controlling thyroid cell metabolism. In Mus musculus (Mouse), this protein is Glycoprotein hormone beta-5 (Gphb5).